Reading from the N-terminus, the 147-residue chain is Peptide methionine sulfoxide reductase MsrB (147 aa).

Positions 8-131 (KEELKKILTE…NSASLKFIPK (124 aa)) constitute a MsrB domain. Catalysis depends on Cys120, which acts as the Nucleophile.

It belongs to the MsrB Met sulfoxide reductase family.

It catalyses the reaction L-methionyl-[protein] + [thioredoxin]-disulfide + H2O = L-methionyl-(R)-S-oxide-[protein] + [thioredoxin]-dithiol. The protein is Peptide methionine sulfoxide reductase MsrB of Clostridium perfringens (strain SM101 / Type A).